We begin with the raw amino-acid sequence, 700 residues long: Calpain-2 catalytic subunit (700 aa).

The residue at position 2 (Ala-2) is an N-acetylalanine. A propeptide spans 2 to 19 (AGIAAKLVKDREAAEGLG) (anchors to the small subunit). The Calpain catalytic domain occupies 45–344 (LFQDPSFPAI…YSRLEICNLT (300 aa)). Residues Ile-89, Gly-91, and Asp-96 each contribute to the Ca(2+) site. The active site involves Cys-105. 3 residues coordinate Ca(2+): Glu-175, Gln-229, and Lys-230. Residues His-262 and Asn-286 contribute to the active site. Residues Glu-292, Asp-299, and Glu-323 each coordinate Ca(2+). Residues 345–514 (PDTLTSDTYK…KKADYQAVDD (170 aa)) are domain III. The segment at 515–529 (EIEANLEEFDISEDD) is linker. The domain IV stretch occupies residues 530–700 (IDDGFRRLFA…LISWLCFSVL (171 aa)). Residues Ala-542, Asp-545, Glu-547, Glu-552, Asp-585, Asp-587, Ser-589, Lys-591, Glu-596, Asp-615, Asp-617, Ser-619, Thr-621, Glu-626, Asp-658, and Asn-661 each contribute to the Ca(2+) site. EF-hand domains are found at residues 572–605 (FSIE…TKIQ) and 602–637 (TKIQ…AGFK). One can recognise an EF-hand 3 domain in the interval 667-700 (VRLETLFKIFKQLDPENTGTIELDLISWLCFSVL).

The protein belongs to the peptidase C2 family. Forms a heterodimer with a small (regulatory) subunit (CAPNS1). Interacts with CPEB3; this leads to cleavage of CPEB3. It depends on Ca(2+) as a cofactor.

It is found in the cytoplasm. The protein localises to the cell membrane. The enzyme catalyses Broad endopeptidase specificity.. Activated by 200-1000 micromolar concentrations of calcium and inhibited by calpastatin. In terms of biological role, calcium-regulated non-lysosomal thiol-protease which catalyzes limited proteolysis of substrates involved in cytoskeletal remodeling and signal transduction. Proteolytically cleaves MYOC at 'Arg-226'. Proteolytically cleaves CPEB3 following neuronal stimulation which abolishes CPEB3 translational repressor activity, leading to translation of CPEB3 target mRNAs. The sequence is that of Calpain-2 catalytic subunit (CAPN2) from Macaca fascicularis (Crab-eating macaque).